The primary structure comprises 556 residues: Oxygen-dependent choline dehydrogenase (556 aa).

4–33 (DYIIIGAGSAGNVLATRLTEDPNTSVLLLE) provides a ligand contact to FAD. Histidine 473 serves as the catalytic Proton acceptor.

Belongs to the GMC oxidoreductase family. It depends on FAD as a cofactor.

The enzyme catalyses choline + A = betaine aldehyde + AH2. The catalysed reaction is betaine aldehyde + NAD(+) + H2O = glycine betaine + NADH + 2 H(+). The protein operates within amine and polyamine biosynthesis; betaine biosynthesis via choline pathway; betaine aldehyde from choline (cytochrome c reductase route): step 1/1. Functionally, involved in the biosynthesis of the osmoprotectant glycine betaine. Catalyzes the oxidation of choline to betaine aldehyde and betaine aldehyde to glycine betaine at the same rate. This chain is Oxygen-dependent choline dehydrogenase, found in Shigella flexneri serotype 5b (strain 8401).